The following is a 274-amino-acid chain: Large ribosomal subunit protein uL2 (274 aa).

A disordered region spans residues 224 to 274; sequence VMNPVDHPHGGGEGRSPIGRNPVTPWGKPALGARTRKKKPGDRLIVKRRAR. Positions 257–274 are enriched in basic residues; that stretch reads RTRKKKPGDRLIVKRRAR.

It belongs to the universal ribosomal protein uL2 family. As to quaternary structure, part of the 50S ribosomal subunit. Forms a bridge to the 30S subunit in the 70S ribosome.

Its function is as follows. One of the primary rRNA binding proteins. Required for association of the 30S and 50S subunits to form the 70S ribosome, for tRNA binding and peptide bond formation. It has been suggested to have peptidyltransferase activity; this is somewhat controversial. Makes several contacts with the 16S rRNA in the 70S ribosome. The protein is Large ribosomal subunit protein uL2 of Pelotomaculum thermopropionicum (strain DSM 13744 / JCM 10971 / SI).